Here is a 413-residue protein sequence, read N- to C-terminus: UPF0754 membrane protein PCC7424_0748 (413 aa).

Transmembrane regions (helical) follow at residues 3-23 (IALELSTIWTIALPPITGAII) and 391-411 (IVNLGGILGFFVGTIQTVILL).

This sequence belongs to the UPF0754 family.

It is found in the cell inner membrane. The polypeptide is UPF0754 membrane protein PCC7424_0748 (Gloeothece citriformis (strain PCC 7424) (Cyanothece sp. (strain PCC 7424))).